A 460-amino-acid polypeptide reads, in one-letter code: Histidinol dehydrogenase (460 aa).

Residues S269, Q291, and H294 each contribute to the substrate site. Positions 291 and 294 each coordinate Zn(2+). Active-site proton acceptor residues include E358 and H359. Substrate is bound by residues H359, D392, E446, and H451. D392 provides a ligand contact to Zn(2+). A Zn(2+)-binding site is contributed by H451.

This sequence belongs to the histidinol dehydrogenase family. It depends on Zn(2+) as a cofactor.

The enzyme catalyses L-histidinol + 2 NAD(+) + H2O = L-histidine + 2 NADH + 3 H(+). It participates in amino-acid biosynthesis; L-histidine biosynthesis; L-histidine from 5-phospho-alpha-D-ribose 1-diphosphate: step 9/9. Catalyzes the sequential NAD-dependent oxidations of L-histidinol to L-histidinaldehyde and then to L-histidine. This Rhodopirellula baltica (strain DSM 10527 / NCIMB 13988 / SH1) protein is Histidinol dehydrogenase.